Consider the following 232-residue polypeptide: MPFTPIKLEAFGSREDLYDAAASVLVGALTTAVARHGRVGFAATGGTTPAPVYDRMATMTAPWDKVTVTLTDERFVPATDASSNEGLVRRHLLVGEAAKASFAPLFFDGVSHDESARKAEAGVNAATPFGVVLLGVGPDGHFASLFPGNPMLDQGLDLATDRSVLAVPPSDPAPDLPRLSLTLAALTRTDLIVLLVTGAAKKALLDGDVDPALPVAAILKQDRAKVRILWAE.

The protein belongs to the glucosamine/galactosamine-6-phosphate isomerase family. 6-phosphogluconolactonase subfamily.

It catalyses the reaction 6-phospho-D-glucono-1,5-lactone + H2O = 6-phospho-D-gluconate + H(+). It functions in the pathway carbohydrate degradation; pentose phosphate pathway; D-ribulose 5-phosphate from D-glucose 6-phosphate (oxidative stage): step 2/3. Hydrolysis of 6-phosphogluconolactone to 6-phosphogluconate. The sequence is that of 6-phosphogluconolactonase (pgl) from Caulobacter vibrioides (strain ATCC 19089 / CIP 103742 / CB 15) (Caulobacter crescentus).